Consider the following 261-residue polypeptide: Cytochrome c oxidase subunit 3 (261 aa).

Residues 1–15 lie on the Mitochondrial matrix side of the membrane; that stretch reads MTHQTHAYHMVNPSP. The chain crosses the membrane as a helical span at residues 16–34; that stretch reads WPLTGALSALLMTSGLAMW. Over 35 to 40 the chain is Mitochondrial intermembrane; the sequence is FHFNSV. A helical membrane pass occupies residues 41–66; it reads TLLTLGLTTNMLTMYQWWRDIIREST. Over 67 to 72 the chain is Mitochondrial matrix; it reads FQGHHT. The helical transmembrane segment at 73-105 threads the bilayer; sequence PTVQKGLRYGMILFIISEVLFFTGFFWAFYHSS. The Mitochondrial intermembrane segment spans residues 106–128; that stretch reads LAPTPELGGCWPPTGISPLNPLE. A helical transmembrane segment spans residues 129 to 152; it reads VPLLNTSVLLASGVSITWAHHSLM. Residues 153–155 lie on the Mitochondrial matrix side of the membrane; it reads EGN. The chain crosses the membrane as a helical span at residues 156 to 183; the sequence is RNHMLQALFITIALGVYFTLLQASEYYE. Topologically, residues 184-190 are mitochondrial intermembrane; sequence APFTISD. The helical transmembrane segment at 191 to 223 threads the bilayer; sequence GIYGSTFFVATGFHGLHVIIGSTFLIVCFFRQL. Over 224-232 the chain is Mitochondrial matrix; the sequence is KFHFTSNHH. Residues 233 to 256 traverse the membrane as a helical segment; the sequence is FGFEAAAWYWHFVDVVWLFLYVSI. The Mitochondrial intermembrane portion of the chain corresponds to 257 to 261; that stretch reads YWWGS.

Belongs to the cytochrome c oxidase subunit 3 family. Component of the cytochrome c oxidase (complex IV, CIV), a multisubunit enzyme composed of 14 subunits. The complex is composed of a catalytic core of 3 subunits MT-CO1, MT-CO2 and MT-CO3, encoded in the mitochondrial DNA, and 11 supernumerary subunits COX4I, COX5A, COX5B, COX6A, COX6B, COX6C, COX7A, COX7B, COX7C, COX8 and NDUFA4, which are encoded in the nuclear genome. The complex exists as a monomer or a dimer and forms supercomplexes (SCs) in the inner mitochondrial membrane with NADH-ubiquinone oxidoreductase (complex I, CI) and ubiquinol-cytochrome c oxidoreductase (cytochrome b-c1 complex, complex III, CIII), resulting in different assemblies (supercomplex SCI(1)III(2)IV(1) and megacomplex MCI(2)III(2)IV(2)).

It localises to the mitochondrion inner membrane. The catalysed reaction is 4 Fe(II)-[cytochrome c] + O2 + 8 H(+)(in) = 4 Fe(III)-[cytochrome c] + 2 H2O + 4 H(+)(out). Functionally, component of the cytochrome c oxidase, the last enzyme in the mitochondrial electron transport chain which drives oxidative phosphorylation. The respiratory chain contains 3 multisubunit complexes succinate dehydrogenase (complex II, CII), ubiquinol-cytochrome c oxidoreductase (cytochrome b-c1 complex, complex III, CIII) and cytochrome c oxidase (complex IV, CIV), that cooperate to transfer electrons derived from NADH and succinate to molecular oxygen, creating an electrochemical gradient over the inner membrane that drives transmembrane transport and the ATP synthase. Cytochrome c oxidase is the component of the respiratory chain that catalyzes the reduction of oxygen to water. Electrons originating from reduced cytochrome c in the intermembrane space (IMS) are transferred via the dinuclear copper A center (CU(A)) of subunit 2 and heme A of subunit 1 to the active site in subunit 1, a binuclear center (BNC) formed by heme A3 and copper B (CU(B)). The BNC reduces molecular oxygen to 2 water molecules using 4 electrons from cytochrome c in the IMS and 4 protons from the mitochondrial matrix. This is Cytochrome c oxidase subunit 3 (MT-CO3) from Neotragus moschatus (Suni).